The following is a 424-amino-acid chain: Enolase (424 aa).

Gln-165 contributes to the (2R)-2-phosphoglycerate binding site. Glu-207 acts as the Proton donor in catalysis. The Mg(2+) site is built by Asp-244, Glu-283, and Asp-310. Residues Lys-335, Arg-364, Ser-365, and Lys-386 each contribute to the (2R)-2-phosphoglycerate site. Lys-335 acts as the Proton acceptor in catalysis.

It belongs to the enolase family. It depends on Mg(2+) as a cofactor.

It localises to the cytoplasm. Its subcellular location is the secreted. The protein resides in the cell surface. It carries out the reaction (2R)-2-phosphoglycerate = phosphoenolpyruvate + H2O. It participates in carbohydrate degradation; glycolysis; pyruvate from D-glyceraldehyde 3-phosphate: step 4/5. Catalyzes the reversible conversion of 2-phosphoglycerate (2-PG) into phosphoenolpyruvate (PEP). It is essential for the degradation of carbohydrates via glycolysis. This Chlamydia abortus (strain DSM 27085 / S26/3) (Chlamydophila abortus) protein is Enolase.